The sequence spans 192 residues: Inosine triphosphate pyrophosphatase (192 aa).

8-13 (TTNLKK) lines the ITP pocket. Mg(2+) is bound at residue E34. Residues K46, 64 to 65 (DT), K81, 141 to 144 (EGFD), K164, and 169 to 170 (HR) each bind ITP.

This sequence belongs to the HAM1 NTPase family. Homodimer. The cofactor is Mg(2+). Mn(2+) serves as cofactor.

The protein resides in the cytoplasm. Its subcellular location is the nucleus. It catalyses the reaction ITP + H2O = IMP + diphosphate + H(+). It carries out the reaction dITP + H2O = dIMP + diphosphate + H(+). The enzyme catalyses XTP + H2O = XMP + diphosphate + H(+). Functionally, pyrophosphatase that hydrolyzes non-canonical purine nucleotides such as inosine triphosphate (ITP), deoxyinosine triphosphate (dITP) or xanthosine 5'-triphosphate (XTP) to their respective monophosphate derivatives. The enzyme does not distinguish between the deoxy- and ribose forms. Probably excludes non-canonical purines from RNA and DNA precursor pools, thus preventing their incorporation into RNA and DNA and avoiding chromosomal lesions. The polypeptide is Inosine triphosphate pyrophosphatase (Encephalitozoon cuniculi (strain GB-M1) (Microsporidian parasite)).